We begin with the raw amino-acid sequence, 655 residues long: FYVE, RhoGEF and PH domain-containing protein 2 (655 aa).

Phosphoserine occurs at positions 11 and 48. Residues 18–64 (VFENSRTPEAAPRGQRLEDVHHRPECRPPESPGPREKTNVGEAVGSE) are disordered. Positions 32 to 56 (QRLEDVHHRPECRPPESPGPREKTN) are enriched in basic and acidic residues. A DH domain is found at 102-290 (PEKKIVQELL…FSAAQHSNAA (189 aa)). One can recognise a PH 1 domain in the interval 319–418 (TLLREGPVLK…WMQAFQAAID (100 aa)). An FYVE-type zinc finger spans residues 458 to 518 (DKMVTMCMRC…VCLHCYAFLT (61 aa)). C464, C467, C481, C484, C489, C492, C510, and C513 together coordinate Zn(2+). The PH 2 domain maps to 544 to 641 (QSLMCSFLQL…WVKAMERAAS (98 aa)). The residue at position 654 (S654) is a Phosphoserine.

The protein resides in the cytoplasm. The protein localises to the cytoskeleton. Its subcellular location is the nucleus. It localises to the early endosome. It is found in the early endosome membrane. The protein resides in the cell projection. The protein localises to the ruffle membrane. Functionally, activates CDC42, a member of the Ras-like family of Rho- and Rac proteins, by exchanging bound GDP for free GTP. Activates JNK1 via CDC42 but not RAC1. Binds to phosphatidylinositol 4,5-bisphosphate, phosphatidylinositol 3,4,5-trisphosphate, phosphatidylinositol 5-monophosphate, phosphatidylinositol 4-monophosphate and phosphatidylinositol 3-monophosphate. In Homo sapiens (Human), this protein is FYVE, RhoGEF and PH domain-containing protein 2 (FGD2).